Reading from the N-terminus, the 171-residue chain is Ribosome maturation factor RimM (171 aa).

The PRC barrel domain occupies 96–169 (EGEFFIADMI…KMIIDPIKGM (74 aa)).

It belongs to the RimM family. Binds ribosomal protein uS19.

It localises to the cytoplasm. In terms of biological role, an accessory protein needed during the final step in the assembly of 30S ribosomal subunit, possibly for assembly of the head region. Essential for efficient processing of 16S rRNA. May be needed both before and after RbfA during the maturation of 16S rRNA. It has affinity for free ribosomal 30S subunits but not for 70S ribosomes. This is Ribosome maturation factor RimM from Clostridioides difficile (strain 630) (Peptoclostridium difficile).